The sequence spans 320 residues: Cytochrome c biogenesis protein CcsA (320 aa).

Transmembrane regions (helical) follow at residues phenylalanine 15–isoleucine 35, lysine 43–serine 63, leucine 71–phenylalanine 91, leucine 98–leucine 118, methionine 143–isoleucine 163, valine 224–asparagine 244, tryptophan 251–leucine 271, and alanine 285–leucine 305.

It belongs to the CcmF/CycK/Ccl1/NrfE/CcsA family. As to quaternary structure, may interact with Ccs1.

It localises to the plastid. The protein localises to the chloroplast thylakoid membrane. Functionally, required during biogenesis of c-type cytochromes (cytochrome c6 and cytochrome f) at the step of heme attachment. This chain is Cytochrome c biogenesis protein CcsA, found in Panax ginseng (Korean ginseng).